Reading from the N-terminus, the 210-residue chain is T-cell surface glycoprotein CD8 beta chain (210 aa).

An N-terminal signal peptide occupies residues 1–21 (MQPGLWLLLATQLAALRGSSV). Residues 22-132 (LQQAPGSVMV…ELTFGKGTRL (111 aa)) enclose the Ig-like V-type domain. Residues 22-170 (LQQAPGSVMV…VTQKGPSCGL (149 aa)) are Extracellular-facing. Cys-41 and Cys-116 are oxidised to a cystine. Asn-102 carries N-linked (GlcNAc...) asparagine glycosylation. Residues 139-161 (PTNSQPTKKPTPRKKMCRPPSPV) form a disordered region. A helical membrane pass occupies residues 171 to 191 (LTLGLLVAGVLVLLVSLGVAI). Residues 192–210 (HLYRLKRRARLRLLKQFYK) are Cytoplasmic-facing.

In terms of assembly, forms disulfide-linked heterodimers with CD8A at the cell surface. Interacts with CD3D; this interaction couples TCR-CD3 with CD8. Interacts with LCK. Phosphorylated as a consequence of T-cell activation. Post-translationally, palmitoylated at the cytoplasmic tail and thereby targets the heterodimer CD8A/CD8B to lipid rafts unlike CD8A homodimers.

It localises to the cell membrane. In terms of biological role, integral membrane glycoprotein that plays an essential role in the immune response and serves multiple functions in responses against both external and internal offenses. In T-cells, functions primarily as a coreceptor for MHC class I molecule:peptide complex. The antigens presented by class I peptides are derived from cytosolic proteins while class II derived from extracellular proteins. Interacts simultaneously with the T-cell receptor (TCR) and the MHC class I proteins presented by antigen presenting cells (APCs). In turn, recruits the Src kinase LCK to the vicinity of the TCR-CD3 complex. A palmitoylation site in the cytoplasmic tail of CD8B chain contributes to partitioning of CD8 into the plasma membrane lipid rafts where signaling proteins are enriched. Once LCK recruited, it initiates different intracellular signaling pathways by phosphorylating various substrates ultimately leading to lymphokine production, motility, adhesion and activation of cytotoxic T-lymphocytes (CTLs). Additionally, plays a critical role in thymic selection of CD8+ T-cells. In Felis catus (Cat), this protein is T-cell surface glycoprotein CD8 beta chain (CD8B).